We begin with the raw amino-acid sequence, 257 residues long: Nopaline permease ATP-binding protein P (257 aa).

The 246-residue stretch at 8–253 (LVAEDVHKNF…PTSPRCRAFL (246 aa)) folds into the ABC transporter domain. 40–47 (GSSGSGKS) contributes to the ATP binding site.

It belongs to the ABC transporter superfamily.

It localises to the cell inner membrane. Its function is as follows. Component of the nopaline active transport system probably consisting of four subunits: Q, M, P and T. This system is also capable of transporting octopine provided that catabolic functions are induced with nopaline. This chain is Nopaline permease ATP-binding protein P (nocP), found in Agrobacterium fabrum (strain C58 / ATCC 33970) (Agrobacterium tumefaciens (strain C58)).